Here is a 529-residue protein sequence, read N- to C-terminus: Glycerol kinase 5 (529 aa).

The ATP site is built by Ser-28 and Ser-29. Glycerol-binding residues include Arg-98, Asp-275, and Gln-276. ATP is bound by residues Thr-297, Gly-340, and Gly-440.

The protein belongs to the FGGY kinase family.

It localises to the cytoplasm. It catalyses the reaction glycerol + ATP = sn-glycerol 3-phosphate + ADP + H(+). Its pathway is polyol metabolism; glycerol degradation via glycerol kinase pathway; sn-glycerol 3-phosphate from glycerol: step 1/1. In terms of biological role, skin-specific kinase that plays a key role in glycerol metabolism, catalyzing its phosphorylation to produce sn-glycerol 3-phosphate. Involved in skin-specific regulation of sterol regulatory element-binding protein (SREBP) processing and lipid biosynthesis. The protein is Glycerol kinase 5 of Homo sapiens (Human).